Consider the following 518-residue polypeptide: Protein translocase subunit SecD (518 aa).

A run of 6 helical transmembrane segments spans residues 9–29 (IFLS…NFMQ), 361–381 (LIGF…LGLF), 384–404 (IALS…QATL), 406–426 (LPGI…NVLI), 452–474 (FATI…IFGV), and 486–506 (IGII…IDIW).

It belongs to the SecD/SecF family. SecD subfamily. In terms of assembly, forms a complex with SecF. Part of the essential Sec protein translocation apparatus which comprises SecA, SecYEG and auxiliary proteins SecDF-YajC and YidC.

It is found in the cell inner membrane. Functionally, part of the Sec protein translocase complex. Interacts with the SecYEG preprotein conducting channel. SecDF uses the proton motive force (PMF) to complete protein translocation after the ATP-dependent function of SecA. The sequence is that of Protein translocase subunit SecD from Rickettsia felis (strain ATCC VR-1525 / URRWXCal2) (Rickettsia azadi).